A 444-amino-acid chain; its full sequence is MVDHISPRASPGPIRSSQTRRARKLRDSCTSCASSKVRCTKEKPACARCIERGLACQYMVSKRMGRNPRAPSPLDSTRRPSESLPSAGSEQGLPAHNTYSTPHAHTQAHTHAHSHPQPHPQSHPQSNQPPHALPTPNGSSSVSAIFSHQSPPPLVETQGLGGDLAGQAQSTLSSLTVDSEFGGSLQSMEHGNHADFLAESTGSLFDAFLEVGTPMIDPFLESAPLPPFQARYCCFSLALQTLTCLFPHAPLGCQLRLTDGEDSSCNLMTTDMVISGNKKATDAVRKILGCSCAQDGYLLSMVVLIVLKVLGWYAAAAGTQCTSTAAGGETNSGSCSNSPATVSSGCLTEERVLHHPSMVGEDCVDEEDQPRVAAQLVLSELHRVQSLANLLAKRLQEGGDDAAGIPAHHPASPFSLLGFSGLEANLRHRLRAVSSDIIDYLHRE.

The interval 1–26 is disordered; that stretch reads MVDHISPRASPGPIRSSQTRRARKLR. Positions 29 to 56 form a DNA-binding region, zn(2)-C6 fungal-type; it reads CTSCASSKVRCTKEKPACARCIERGLAC. A disordered region spans residues 64–167; the sequence is MGRNPRAPSP…QGLGGDLAGQ (104 aa). Residues 106–116 are compositionally biased toward basic residues; it reads TQAHTHAHSHP. Residues 120-130 show a composition bias toward low complexity; the sequence is PQSHPQSNQPP. A compositionally biased stretch (polar residues) spans 136–149; sequence PNGSSSVSAIFSHQ.

As to quaternary structure, interacts with its co-regulator aflS.

The protein localises to the nucleus. It localises to the endosome. Transcription factor involved in regulation of the aflatoxin biosynthesis gene cluster. Binds with its co-regulator aflS to AFLR1 elements (5'-TCGSWNNSCGR-3') present in the promoters of the aflatoxin cluster genes. The ratio of the expression data between aflS:aflR plays a crucial role in the regulation of aflatoxins production. A high ratio, produced at a range between 17 and 30 degrees Celsius, corresponds with the production profile of aflatoxin G1 biosynthesis. A low ratio, produced over 30 degrees Celsius, is related to aflatoxin B1 biosynthesis. In Aspergillus parasiticus (strain ATCC 56775 / NRRL 5862 / SRRC 143 / SU-1), this protein is Aflatoxin biosynthesis regulatory protein.